Here is a 350-residue protein sequence, read N- to C-terminus: Dihydroorotate dehydrogenase (quinone) (350 aa).

Residues 59–63 (AGLDK) and T83 contribute to the FMN site. Residue K63 participates in substrate binding. 108-112 (NRMGF) lines the substrate pocket. Positions 136 and 169 each coordinate FMN. N169 is a substrate binding site. Catalysis depends on S172, which acts as the Nucleophile. N174 provides a ligand contact to substrate. Positions 214 and 242 each coordinate FMN. 243-244 (NT) contacts substrate. FMN is bound by residues G265, G294, and 315 to 316 (YS).

The protein belongs to the dihydroorotate dehydrogenase family. Type 2 subfamily. In terms of assembly, monomer. FMN is required as a cofactor.

Its subcellular location is the cell membrane. The enzyme catalyses (S)-dihydroorotate + a quinone = orotate + a quinol. The protein operates within pyrimidine metabolism; UMP biosynthesis via de novo pathway; orotate from (S)-dihydroorotate (quinone route): step 1/1. In terms of biological role, catalyzes the conversion of dihydroorotate to orotate with quinone as electron acceptor. The sequence is that of Dihydroorotate dehydrogenase (quinone) from Aromatoleum aromaticum (strain DSM 19018 / LMG 30748 / EbN1) (Azoarcus sp. (strain EbN1)).